We begin with the raw amino-acid sequence, 128 residues long: Small ribosomal subunit protein uS8 (128 aa).

It belongs to the universal ribosomal protein uS8 family. Part of the 30S ribosomal subunit. Contacts proteins S5 and S12.

Functionally, one of the primary rRNA binding proteins, it binds directly to 16S rRNA central domain where it helps coordinate assembly of the platform of the 30S subunit. The chain is Small ribosomal subunit protein uS8 from Methylacidiphilum infernorum (isolate V4) (Methylokorus infernorum (strain V4)).